We begin with the raw amino-acid sequence, 101 residues long: NAD(P)H-quinone oxidoreductase subunit 4L, chloroplastic (101 aa).

3 consecutive transmembrane segments (helical) span residues 2-22, 32-52, and 61-81; these read IFQS…YGLL, MSLE…SNFV, and VLAL…LAII.

The protein belongs to the complex I subunit 4L family. NDH is composed of at least 16 different subunits, 5 of which are encoded in the nucleus.

It localises to the plastid. The protein resides in the chloroplast thylakoid membrane. It catalyses the reaction a plastoquinone + NADH + (n+1) H(+)(in) = a plastoquinol + NAD(+) + n H(+)(out). The catalysed reaction is a plastoquinone + NADPH + (n+1) H(+)(in) = a plastoquinol + NADP(+) + n H(+)(out). Its function is as follows. NDH shuttles electrons from NAD(P)H:plastoquinone, via FMN and iron-sulfur (Fe-S) centers, to quinones in the photosynthetic chain and possibly in a chloroplast respiratory chain. The immediate electron acceptor for the enzyme in this species is believed to be plastoquinone. Couples the redox reaction to proton translocation, and thus conserves the redox energy in a proton gradient. This is NAD(P)H-quinone oxidoreductase subunit 4L, chloroplastic from Nephroselmis olivacea (Green alga).